Reading from the N-terminus, the 61-residue chain is Small ribosomal subunit protein uS14 (61 aa).

Zn(2+) is bound by residues Cys-24, Cys-27, Cys-40, and Cys-43.

It belongs to the universal ribosomal protein uS14 family. Zinc-binding uS14 subfamily. In terms of assembly, part of the 30S ribosomal subunit. Contacts proteins S3 and S10. Zn(2+) serves as cofactor.

Functionally, binds 16S rRNA, required for the assembly of 30S particles and may also be responsible for determining the conformation of the 16S rRNA at the A site. This is Small ribosomal subunit protein uS14 from Borreliella burgdorferi (strain ATCC 35210 / DSM 4680 / CIP 102532 / B31) (Borrelia burgdorferi).